Reading from the N-terminus, the 342-residue chain is D-erythrose-4-phosphate dehydrogenase (342 aa).

12-13 (RI) serves as a coordination point for NAD(+). Residues 154 to 156 (SCT), Arg-200, 213 to 214 (TK), and Arg-236 contribute to the substrate site. Catalysis depends on Cys-155, which acts as the Nucleophile. Asn-318 contacts NAD(+).

Belongs to the glyceraldehyde-3-phosphate dehydrogenase family. Epd subfamily. In terms of assembly, homotetramer.

Its subcellular location is the cytoplasm. It catalyses the reaction D-erythrose 4-phosphate + NAD(+) + H2O = 4-phospho-D-erythronate + NADH + 2 H(+). It participates in cofactor biosynthesis; pyridoxine 5'-phosphate biosynthesis; pyridoxine 5'-phosphate from D-erythrose 4-phosphate: step 1/5. Catalyzes the NAD-dependent conversion of D-erythrose 4-phosphate to 4-phosphoerythronate. This Klebsiella pneumoniae subsp. pneumoniae (strain ATCC 700721 / MGH 78578) protein is D-erythrose-4-phosphate dehydrogenase.